A 183-amino-acid polypeptide reads, in one-letter code: Probable apo-citrate lyase phosphoribosyl-dephospho-CoA transferase (183 aa).

This sequence belongs to the CitX family.

The enzyme catalyses apo-[citrate lyase ACP] + 2'-(5''-triphospho-alpha-D-ribosyl)-3'-dephospho-CoA = holo-[citrate lyase ACP] + diphosphate. Its function is as follows. Transfers 2-(5''-triphosphoribosyl)-3'-dephosphocoenzyme-A on a serine residue to the apo-acyl carrier protein (gamma chain) of the citrate lyase to yield holo-acyl carrier protein. The sequence is that of Probable apo-citrate lyase phosphoribosyl-dephospho-CoA transferase from Escherichia coli (strain 55989 / EAEC).